We begin with the raw amino-acid sequence, 234 residues long: MANLCKRVVDLEKYIVKEAPPTVYYIPDFISEAEEEFLLQQVYRAPKPKWTQLSGRRLQNWGGLPNPKGMLAEKLPDWLLEYTEKISALGAFAGKTANHVLVNEYKPGEGIMPHEDGPLYHPTVTTITVGSHTLLDFYRPVCQAEPDAPQTEESRYMLSLLVQRKSLLILQDDMYKCYLHGIRGVCEDVLSEHVVNISSTGAQVGDTLPRSTRVSLTIRHVPKIIRANLFLGKK.

The 127-residue stretch at 96–222 folds into the Fe2OG dioxygenase domain; sequence TANHVLVNEY…RVSLTIRHVP (127 aa). 2-oxoglutarate contacts are provided by N103 and Y105. The Fe cation site is built by H114, D116, and H180. 2-oxoglutarate is bound by residues R213 and S215.

This sequence belongs to the alkB family. Fe(2+) serves as cofactor.

Its subcellular location is the cytoplasm. It localises to the nucleus. Probable Fe(2+)/2-oxoglutarate-dependent dioxygenase involved in oxidative demethylation of nucleic acids. Binds nucleic acids with a preference for ssDNA or ssRNA to other types of DNAs. May play a role in nucleic acid damage repair. The chain is Probable RNA/DNA demethylase ALKBH6 (alkbh6) from Danio rerio (Zebrafish).